The following is a 168-amino-acid chain: N-alpha-acetyltransferase (168 aa).

The N-acetyltransferase domain occupies 13 to 168 (YQIRLATLSD…EDAYLMAAPL (156 aa)). Tyrosine 38 provides a ligand contact to substrate. Residue histidine 89 coordinates Zn(2+). Residues 93 to 95 (IAV) and 101 to 106 (KIGVGT) contribute to the acetyl-CoA site. Residues 93-95 (IAV) and 101-106 (KIGVGT) each bind CoA. Residue glutamate 128 participates in Zn(2+) binding. Acetyl-CoA is bound by residues asparagine 133 and 140–142 (YKK). CoA is bound at residue asparagine 133. Tyrosine 155 contacts substrate.

It belongs to the acetyltransferase family. ARD1 subfamily. In terms of assembly, homodimer.

The protein localises to the cytoplasm. The enzyme catalyses N-terminal L-alanyl-[protein] + acetyl-CoA = N-terminal N(alpha)-acetyl-L-alanyl-[protein] + CoA + H(+). The catalysed reaction is N-terminal L-seryl-[protein] + acetyl-CoA = N-terminal N(alpha)-acetyl-L-seryl-[protein] + CoA + H(+). It carries out the reaction N-terminal L-methionyl-L-leucyl-[protein] + acetyl-CoA = N-terminal N(alpha)-acetyl-L-methionyl-L-leucyl-[protein] + CoA + H(+). It catalyses the reaction N-terminal L-methionyl-L-glutamyl-[protein] + acetyl-CoA = N-terminal N(alpha)-acetyl-L-methionyl-L-glutamyl-[protein] + CoA + H(+). Displays alpha (N-terminal) acetyltransferase activity. Catalyzes the covalent attachment of an acetyl moiety from acetyl-CoA to the free alpha-amino group at the N-terminus of a protein. This chain is N-alpha-acetyltransferase, found in Sulfolobus acidocaldarius (strain ATCC 33909 / DSM 639 / JCM 8929 / NBRC 15157 / NCIMB 11770).